Here is a 299-residue protein sequence, read N- to C-terminus: ATP phosphoribosyltransferase (299 aa).

Belongs to the ATP phosphoribosyltransferase family. Long subfamily. Mg(2+) is required as a cofactor.

It localises to the cytoplasm. It carries out the reaction 1-(5-phospho-beta-D-ribosyl)-ATP + diphosphate = 5-phospho-alpha-D-ribose 1-diphosphate + ATP. It functions in the pathway amino-acid biosynthesis; L-histidine biosynthesis; L-histidine from 5-phospho-alpha-D-ribose 1-diphosphate: step 1/9. Feedback inhibited by histidine. In terms of biological role, catalyzes the condensation of ATP and 5-phosphoribose 1-diphosphate to form N'-(5'-phosphoribosyl)-ATP (PR-ATP). Has a crucial role in the pathway because the rate of histidine biosynthesis seems to be controlled primarily by regulation of HisG enzymatic activity. The chain is ATP phosphoribosyltransferase from Shewanella oneidensis (strain ATCC 700550 / JCM 31522 / CIP 106686 / LMG 19005 / NCIMB 14063 / MR-1).